A 205-amino-acid polypeptide reads, in one-letter code: Protein phosphatase inhibitor 2 family member B (205 aa).

The tract at residues 1–44 (MAASTASHRPIKGILKNKTSTTSSMVASAEQPRRSVDEELSKKS) is disordered. The residue at position 2 (Ala-2) is an N-acetylalanine. Required for binding PPP1CC regions lie at residues 12–17 (KGILKN) and 43–55 (KSQKWDEINILAT). Residues 17-26 (NKTSTTSSMV) are compositionally biased toward polar residues. Over residues 31-44 (QPRRSVDEELSKKS) the composition is skewed to basic and acidic residues. Ser-44 is subject to Phosphoserine. A phosphothreonine mark is found at Thr-89 and Thr-92. A disordered region spans residues 111-142 (EPKYRIQEQESSGEEDSDLSPEEREKKRQFEM). Phosphoserine occurs at positions 121, 122, 127, and 130. Acidic residues predominate over residues 121 to 130 (SSGEEDSDLS). Over residues 131 to 142 (PEEREKKRQFEM) the composition is skewed to basic and acidic residues. Positions 147 to 150 (HYNE) are required for binding PPP1CC catalytic center, displacing metal ions and inhibition of PPP1CC catalytic activity. The interval 163-205 (KDLHDDDEDEEMLETADGESMNTEESNQGSTPSDQQQNKLRSS) is disordered. A compositionally biased stretch (acidic residues) spans 167-179 (DDDEDEEMLETAD). Positions 182-205 (SMNTEESNQGSTPSDQQQNKLRSS) are enriched in polar residues.

The protein belongs to the protein phosphatase inhibitor 2 family. In terms of assembly, interacts with PPP1CC. As to expression, only detected in spermatozoa, both heads and tails.

Inhibitor of protein-phosphatase 1. This chain is Protein phosphatase inhibitor 2 family member B, found in Homo sapiens (Human).